A 171-amino-acid chain; its full sequence is Co-chaperone protein HscB (171 aa).

Positions 2-74 (DYFTFFGLPA…LMRAEYLLSL (73 aa)) constitute a J domain.

This sequence belongs to the HscB family. As to quaternary structure, interacts with HscA and stimulates its ATPase activity. Interacts with IscU.

Co-chaperone involved in the maturation of iron-sulfur cluster-containing proteins. Seems to help targeting proteins to be folded toward HscA. The protein is Co-chaperone protein HscB of Shigella sonnei (strain Ss046).